The following is a 133-amino-acid chain: Homeobox protein HD-5 (133 aa).

Positions 34–93 form a DNA-binding region, homeobox; it reads SKRSRLKLSGQQIDVLESNFKIDSHPNSATKSLLSNALSIPLKNIQIWFQNRRAKEKTAR. Residues 86–109 are disordered; sequence RAKEKTARDGGRRRSGNAEIEDGE.

Its subcellular location is the nucleus. In Encephalitozoon cuniculi (strain GB-M1) (Microsporidian parasite), this protein is Homeobox protein HD-5 (HD-5).